Here is a 187-residue protein sequence, read N- to C-terminus: Large ribosomal subunit protein uL5 (187 aa).

The protein belongs to the universal ribosomal protein uL5 family. As to quaternary structure, part of the 50S ribosomal subunit; part of the 5S rRNA/L5/L18/L25 subcomplex. Contacts the 5S rRNA and the P site tRNA. Forms a bridge to the 30S subunit in the 70S ribosome.

Functionally, this is one of the proteins that bind and probably mediate the attachment of the 5S RNA into the large ribosomal subunit, where it forms part of the central protuberance. In the 70S ribosome it contacts protein S13 of the 30S subunit (bridge B1b), connecting the 2 subunits; this bridge is implicated in subunit movement. Contacts the P site tRNA; the 5S rRNA and some of its associated proteins might help stabilize positioning of ribosome-bound tRNAs. In Malacoplasma penetrans (strain HF-2) (Mycoplasma penetrans), this protein is Large ribosomal subunit protein uL5.